Here is a 170-residue protein sequence, read N- to C-terminus: Large ribosomal subunit protein uL10 (170 aa).

It belongs to the universal ribosomal protein uL10 family. Part of the ribosomal stalk of the 50S ribosomal subunit. The N-terminus interacts with L11 and the large rRNA to form the base of the stalk. The C-terminus forms an elongated spine to which L12 dimers bind in a sequential fashion forming a multimeric L10(L12)X complex.

In terms of biological role, forms part of the ribosomal stalk, playing a central role in the interaction of the ribosome with GTP-bound translation factors. The polypeptide is Large ribosomal subunit protein uL10 (rplJ) (Chlamydia pneumoniae (Chlamydophila pneumoniae)).